The following is a 439-amino-acid chain: Omega-aminotransferase (439 aa).

Position 112-113 (112-113 (GS)) interacts with pyridoxal 5'-phosphate. K281 is modified (N6-(pyridoxal phosphate)lysine). Residue T318 participates in pyridoxal 5'-phosphate binding.

The protein belongs to the class-III pyridoxal-phosphate-dependent aminotransferase family. As to quaternary structure, homotetramer. It depends on pyridoxal 5'-phosphate as a cofactor.

The catalysed reaction is 3-oxopropanoate + L-alanine = beta-alanine + pyruvate. It catalyses the reaction 3-aminobutanoate + pyruvate = acetoacetate + L-alanine. It carries out the reaction benzylamine + pyruvate = benzaldehyde + L-alanine. The enzyme catalyses (S)-1-phenylethylamine + pyruvate = acetophenone + L-alanine. The catalysed reaction is 2-phenylethylamine + pyruvate = 2-phenylacetaldehyde + L-alanine. It catalyses the reaction 1-phenylpropylamine + pyruvate = 1-phenylpropan-1-one + L-alanine. It carries out the reaction 3-phenylpropylamine + pyruvate = 3-phenylpropanal + L-alanine. Its function is as follows. Aminotransferase that can use beta-amino acids, aliphatic amines, or aromatic amines as amino donors, and pyruvate as amino acceptor. Shows high activity for short-chain beta-amino acids, with the highest activity for 3-aminobutanoate and beta-alanine in vitro. Displays higher activity toward aromatic amines than aliphatic amines. May be involved in beta-alanine biosynthesis and/or degradation. This is Omega-aminotransferase from Caulobacter vibrioides (strain ATCC 19089 / CIP 103742 / CB 15) (Caulobacter crescentus).